Reading from the N-terminus, the 885-residue chain is Insulin receptor substrate 1-A (885 aa).

An IRS-type PTB domain is found at Met1–Phe56. A disordered region spans residues Phe56–Gly225. 4 stretches are compositionally biased toward low complexity: residues Lys61–Pro75, Ser99–Ala109, Ser176–Ser197, and Ser205–Gly217. A Phosphoserine modification is found at Ser104. The residue at position 257 (Tyr257) is a Phosphotyrosine; by INSR. The YXXM motif 1 motif lies at Tyr257–Met260. Composition is skewed to polar residues over residues Ser263–Gln276 and Ser296–Ser313. Disordered regions lie at residues Ser263 to Glu282 and Arg293 to Ser313. 5 consecutive short sequence motifs (YXXM motif) follow at residues Tyr318 to Met321, Tyr364 to Met367, Tyr381 to Met384, Tyr409 to Met412, and Tyr451 to Met454. Phosphotyrosine; by INSR is present on residues Tyr364 and Tyr381. Position 409 is a phosphotyrosine (Tyr409). A disordered region spans residues Asn501 to Glu581. The span at Ile504–Glu515 shows a compositional bias: polar residues. Low complexity predominate over residues Asp516 to Ser526. A phosphotyrosine; by INSR mark is found at Tyr582 and Tyr620. The interval Tyr582–Asn584 is GRB2-binding. Positions Tyr620–Met623 match the YXXM motif 7 motif. The segment covering Thr637–Arg660 has biased composition (polar residues). Residues Thr637–Gly665 form a disordered region. The residue at position 672 (Tyr672) is a Phosphotyrosine; by INSR. Short sequence motifs (YXXM motif) lie at residues Tyr672–Met675 and Tyr706–Met709. Residues Ala732–Ser803 form a disordered region. Composition is skewed to polar residues over residues Gly743 to Pro758 and Glu777 to Pro792. Tyr834 and Tyr866 each carry phosphotyrosine; by INSR.

In terms of assembly, interacts with the NPXY motif of tyrosine-phosphorylated igf1r and insr via the PTB domain. Binds to phosphatidylinositol 3-kinase p85 subunit at a low level in vitro prior to phosphorylation. Binding is greatly enhanced following tyrosine phosphorylation by insr and probably occurs via the phosphorylated YXXM motifs. In terms of processing, phosphorylation of Tyr-582 is required for grb2-binding.

May mediate the control of various cellular processes by insulin. When phosphorylated by the insulin receptor binds specifically to various cellular proteins containing SH2 domains such as phosphatidylinositol 3-kinase p85 subunit or grb2. Activates phosphatidylinositol 3-kinase when bound to the regulatory p85 subunit. The chain is Insulin receptor substrate 1-A (irs1-a) from Xenopus laevis (African clawed frog).